The chain runs to 386 residues: Succinate--CoA ligase [ADP-forming] subunit beta (386 aa).

Residues lysine 46, 53 to 55 (GRG), glutamate 99, glutamine 102, and glutamate 107 contribute to the ATP site. Mg(2+) contacts are provided by asparagine 199 and aspartate 213. Residues asparagine 264 and 321 to 323 (GIV) contribute to the substrate site.

Belongs to the succinate/malate CoA ligase beta subunit family. As to quaternary structure, heterotetramer of two alpha and two beta subunits. Requires Mg(2+) as cofactor.

The enzyme catalyses succinate + ATP + CoA = succinyl-CoA + ADP + phosphate. It catalyses the reaction GTP + succinate + CoA = succinyl-CoA + GDP + phosphate. The protein operates within carbohydrate metabolism; tricarboxylic acid cycle; succinate from succinyl-CoA (ligase route): step 1/1. In terms of biological role, succinyl-CoA synthetase functions in the citric acid cycle (TCA), coupling the hydrolysis of succinyl-CoA to the synthesis of either ATP or GTP and thus represents the only step of substrate-level phosphorylation in the TCA. The beta subunit provides nucleotide specificity of the enzyme and binds the substrate succinate, while the binding sites for coenzyme A and phosphate are found in the alpha subunit. The sequence is that of Succinate--CoA ligase [ADP-forming] subunit beta from Ruthia magnifica subsp. Calyptogena magnifica.